The chain runs to 660 residues: UvrABC system protein C (660 aa).

Residues 16-95 (ESPGVYRFRD…IKQYDPRFNV (80 aa)) form the GIY-YIG domain. Residues 208-243 (DAMVRRLEREMAEASAELEFERAARLRDDLAALRRA) enclose the UVR domain. Positions 469–501 (GEAGVESAGDPDAPAGPDAPDEPRVGTLVDPTT) are disordered. Low complexity predominate over residues 476-486 (AGDPDAPAGPD).

Belongs to the UvrC family. Interacts with UvrB in an incision complex.

The protein resides in the cytoplasm. In terms of biological role, the UvrABC repair system catalyzes the recognition and processing of DNA lesions. UvrC both incises the 5' and 3' sides of the lesion. The N-terminal half is responsible for the 3' incision and the C-terminal half is responsible for the 5' incision. This chain is UvrABC system protein C, found in Salinispora arenicola (strain CNS-205).